Consider the following 281-residue polypeptide: Protease HtpX homolog (281 aa).

2 helical membrane-spanning segments follow: residues 6–26 and 28–48; these read VWLL…AIGG and SGAL…YYYS. His-130 provides a ligand contact to Zn(2+). Glu-131 is an active-site residue. His-134 lines the Zn(2+) pocket. The next 2 membrane-spanning stretches (helical) occupy residues 140-160 and 181-201; these read VLIG…SNIV and IASL…QLAI. Glu-206 is a binding site for Zn(2+).

This sequence belongs to the peptidase M48B family. It depends on Zn(2+) as a cofactor.

The protein localises to the cell membrane. This is Protease HtpX homolog from Pelotomaculum thermopropionicum (strain DSM 13744 / JCM 10971 / SI).